Here is a 453-residue protein sequence, read N- to C-terminus: Ribulose bisphosphate carboxylase large chain (453 aa).

Residues 1–2 constitute a propeptide that is removed on maturation; it reads MS. Residue proline 3 is modified to N-acetylproline. Lysine 14 carries the post-translational modification N6,N6,N6-trimethyllysine. Positions 123 and 173 each coordinate substrate. Lysine 175 (proton acceptor) is an active-site residue. Lysine 177 lines the substrate pocket. 3 residues coordinate Mg(2+): lysine 201, aspartate 203, and glutamate 204. At lysine 201 the chain carries N6-carboxylysine. The active-site Proton acceptor is the histidine 294. Arginine 295, histidine 327, and serine 379 together coordinate substrate.

This sequence belongs to the RuBisCO large chain family. Type I subfamily. As to quaternary structure, heterohexadecamer of 8 large chains and 8 small chains; disulfide-linked. The disulfide link is formed within the large subunit homodimers. Mg(2+) is required as a cofactor. Post-translationally, the disulfide bond which can form in the large chain dimeric partners within the hexadecamer appears to be associated with oxidative stress and protein turnover.

It is found in the plastid. It localises to the chloroplast. The enzyme catalyses 2 (2R)-3-phosphoglycerate + 2 H(+) = D-ribulose 1,5-bisphosphate + CO2 + H2O. It carries out the reaction D-ribulose 1,5-bisphosphate + O2 = 2-phosphoglycolate + (2R)-3-phosphoglycerate + 2 H(+). Its function is as follows. RuBisCO catalyzes two reactions: the carboxylation of D-ribulose 1,5-bisphosphate, the primary event in carbon dioxide fixation, as well as the oxidative fragmentation of the pentose substrate in the photorespiration process. Both reactions occur simultaneously and in competition at the same active site. The chain is Ribulose bisphosphate carboxylase large chain from Hydnophytum formicarum (Ant plant).